We begin with the raw amino-acid sequence, 431 residues long: 3-phosphoshikimate 1-carboxyvinyltransferase (431 aa).

3-phosphoshikimate contacts are provided by Lys-21, Ser-22, and Arg-26. Lys-21 is a binding site for phosphoenolpyruvate. Phosphoenolpyruvate is bound by residues Gly-93 and Arg-121. 5 residues coordinate 3-phosphoshikimate: Ser-166, Gln-168, Ser-192, Asp-317, and Lys-344. Residue Gln-168 coordinates phosphoenolpyruvate. Asp-317 serves as the catalytic Proton acceptor. Phosphoenolpyruvate is bound by residues Arg-348 and Arg-390.

Belongs to the EPSP synthase family. In terms of assembly, monomer.

Its subcellular location is the cytoplasm. The enzyme catalyses 3-phosphoshikimate + phosphoenolpyruvate = 5-O-(1-carboxyvinyl)-3-phosphoshikimate + phosphate. Its pathway is metabolic intermediate biosynthesis; chorismate biosynthesis; chorismate from D-erythrose 4-phosphate and phosphoenolpyruvate: step 6/7. Functionally, catalyzes the transfer of the enolpyruvyl moiety of phosphoenolpyruvate (PEP) to the 5-hydroxyl of shikimate-3-phosphate (S3P) to produce enolpyruvyl shikimate-3-phosphate and inorganic phosphate. The polypeptide is 3-phosphoshikimate 1-carboxyvinyltransferase (Herpetosiphon aurantiacus (strain ATCC 23779 / DSM 785 / 114-95)).